The primary structure comprises 484 residues: MLLNSNELEHIHSTNHSVNDISIRWGVIGAGQKGNKEADLFAGYKFSNGTTCYPTLAVNFAESDMMHLQNIIKEDRIHFDGLKGAARTPSVVTDLFDPETNPNANGYLDKLAQELGRKFTNEEGEVIVDQFLICLGAGGGVGTGWGSLVLQLIREQFFPCPVSMLISLPSGDPDEINNALVLLSEIDEFMREQDRLFGNSDIKPLANVIVNDNTQMQRIIESQKGTKDLKNRYVNWKEVANDNVVSTLHEINIIPENYGSDNVTYDPSDLIKLLSIPGRFLTIGKARIAKFDLHSLENSIKRSLDEGFFSAEHQFETATMYGGFVLRPSNADFFKDVNTENRIRNTLGEYKRLDEIAGKFGDPIWDNEYAVCYTIFAGMTMPKRYISLAREGKELAEKQEQLRAEAQRKQDEEKVDISFATNRVQKNTFNPYNKNQGFGGASRFSGGKNSAFKRQTSEATSTQNQQEEENIISTLKTSNPFKKR.

32–33 (QK) lines the GTP pocket. A Mg(2+)-binding site is contributed by Asp64. GTP is bound by residues 140–142 (GVG), Asn213, Lys237, and Asn241. The interval 408-484 (RKQDEEKVDI…LKTSNPFKKR (77 aa)) is required to bind TubR-DNA complex. Positions 428-484 (TFNPYNKNQGFGGASRFSGGKNSAFKRQTSEATSTQNQQEEENIISTLKTSNPFKKR) are disordered. A compositionally biased stretch (polar residues) spans 452–484 (FKRQTSEATSTQNQQEEENIISTLKTSNPFKKR).

Belongs to the FtsZ family. TubZ subfamily. Forms filaments; a 2-stranded filament forms with the non-hydrolyzable GTP-gamma-S which is probably a precursor to the 4-stranded filament that forms in the presence of GTP. The 4-stranded form binds GDP. In vivo polymerizes to form dynamic filaments that often extend from one cell pole to the other, moving in a unidirectional manner. Filaments polymerize at the plus end and depolymerize at the minus end, a process called treadmilling. Polymerization only occurs above a critical concentration, it does not require upstream tubR. The tubC DNA-TubR complex binds to TubZ. The cofactor is Mg(2+).

It is found in the cytoplasm. The enzyme catalyses GTP + H2O = GDP + phosphate + H(+). Its activity is regulated as follows. GTPase is inhibited by GTP-gamma-S, which also stabilizes filaments. Functionally, a tubulin-like, filament forming GTPase; the motor component of the type III plasmid partition system which ensures correct segregation of the pBtoxis plasmid. Filaments may seed from the centromere-like site (tubC) when bound by DNA-binding protein TubR; the tubC-TubR complex stabilizes the TubZ filament. Filaments grow at the plus end and depolymerize at the minus end, a process called treadmilling. TubR-tubC complexes track the depolymerizing minus end of the filament, probably pulling plasmid within the cell. Required for pBtoxis plasmid replication/partition. Binds the TubR-tubC complex; GTP is not required for binding to TubR-tubC. TubZ alone does not bind DNA. Has a high GTPase activity in the presence of Mg(2+); in the presence of GTP assembles into dynamic filaments which upon polymerization bind almost exclusively GDP. Filament formation is cooperative, requiring a critical concentration. Formation occurs very quickly and is followed by disassembly as GTP is consumed. The sequence is that of Tubulin-like protein TubZ from Bacillus thuringiensis subsp. israelensis.